The sequence spans 109 residues: Large ribosomal subunit protein uL22 (109 aa).

This sequence belongs to the universal ribosomal protein uL22 family. Part of the 50S ribosomal subunit.

This protein binds specifically to 23S rRNA; its binding is stimulated by other ribosomal proteins, e.g. L4, L17, and L20. It is important during the early stages of 50S assembly. It makes multiple contacts with different domains of the 23S rRNA in the assembled 50S subunit and ribosome. Its function is as follows. The globular domain of the protein is located near the polypeptide exit tunnel on the outside of the subunit, while an extended beta-hairpin is found that lines the wall of the exit tunnel in the center of the 70S ribosome. The polypeptide is Large ribosomal subunit protein uL22 (Polaromonas naphthalenivorans (strain CJ2)).